A 573-amino-acid chain; its full sequence is PCNA-interacting partner (573 aa).

The disordered stretch occupies residues 463–511; it reads VSEGAQPSVGKARLETSSENVHVDRSKDDKGPRKSTKRKLAKSKQPGVR. Positions 474–494 are enriched in basic and acidic residues; that stretch reads ARLETSSENVHVDRSKDDKGP. Over residues 495 to 504 the composition is skewed to basic residues; sequence RKSTKRKLAK.

This sequence belongs to the PARI family. As to quaternary structure, interacts with RAD51 and PCNA. Interacts with PARP1. Interacts with TASOR. As to expression, present in testis (at protein level). Expressed in testis, gastrointestinal tract (jejunum, ileum, and colon) and immune system (thymus and spleen). Weakly expressed in lung, kidney, pituitary gland and muscle.

Its subcellular location is the cytoplasm. It is found in the nucleus. Required to suppress inappropriate homologous recombination, thereby playing a central role DNA repair and in the maintenance of genomic stability. Antagonizes homologous recombination by interfering with the formation of the RAD51-DNA homologous recombination structure. Positively regulate the poly(ADP-ribosyl)ation activity of PARP1; however such function may be indirect. Binds single-strand DNA and poly(A) homopolymers. The protein is PCNA-interacting partner (Parpbp) of Rattus norvegicus (Rat).